The following is a 284-amino-acid chain: 2-dehydro-3-deoxyphosphooctonate aldolase (284 aa).

This sequence belongs to the KdsA family.

The protein localises to the cytoplasm. It carries out the reaction D-arabinose 5-phosphate + phosphoenolpyruvate + H2O = 3-deoxy-alpha-D-manno-2-octulosonate-8-phosphate + phosphate. The protein operates within carbohydrate biosynthesis; 3-deoxy-D-manno-octulosonate biosynthesis; 3-deoxy-D-manno-octulosonate from D-ribulose 5-phosphate: step 2/3. It participates in bacterial outer membrane biogenesis; lipopolysaccharide biosynthesis. In Haemophilus influenzae (strain 86-028NP), this protein is 2-dehydro-3-deoxyphosphooctonate aldolase.